A 362-amino-acid chain; its full sequence is 3-dehydroquinate synthase (362 aa).

Residues 71 to 76 (DGEQYK), 105 to 109 (GVIGD), 129 to 130 (TT), Lys142, Lys151, and 169 to 172 (CLKT) contribute to the NAD(+) site. Glu184, His247, and His264 together coordinate Zn(2+).

This sequence belongs to the sugar phosphate cyclases superfamily. Dehydroquinate synthase family. Co(2+) serves as cofactor. It depends on Zn(2+) as a cofactor. Requires NAD(+) as cofactor.

The protein localises to the cytoplasm. It carries out the reaction 7-phospho-2-dehydro-3-deoxy-D-arabino-heptonate = 3-dehydroquinate + phosphate. It participates in metabolic intermediate biosynthesis; chorismate biosynthesis; chorismate from D-erythrose 4-phosphate and phosphoenolpyruvate: step 2/7. Its function is as follows. Catalyzes the conversion of 3-deoxy-D-arabino-heptulosonate 7-phosphate (DAHP) to dehydroquinate (DHQ). The protein is 3-dehydroquinate synthase of Salmonella schwarzengrund (strain CVM19633).